Here is a 738-residue protein sequence, read N- to C-terminus: 1,4-alpha-glucan branching enzyme GlgB (738 aa).

Residue aspartate 399 is the Nucleophile of the active site. The active-site Proton donor is the glutamate 452.

The protein belongs to the glycosyl hydrolase 13 family. GlgB subfamily. Monomer.

It catalyses the reaction Transfers a segment of a (1-&gt;4)-alpha-D-glucan chain to a primary hydroxy group in a similar glucan chain.. Its pathway is glycan biosynthesis; glycogen biosynthesis. Catalyzes the formation of the alpha-1,6-glucosidic linkages in glycogen by scission of a 1,4-alpha-linked oligosaccharide from growing alpha-1,4-glucan chains and the subsequent attachment of the oligosaccharide to the alpha-1,6 position. This is 1,4-alpha-glucan branching enzyme GlgB from Chlamydia trachomatis serovar D (strain ATCC VR-885 / DSM 19411 / UW-3/Cx).